A 143-amino-acid polypeptide reads, in one-letter code: Heat shock protein 16 (143 aa).

The sHSP domain maps to 30–143 (QIPGELSPSI…SQTKKQIAIK (114 aa)).

Belongs to the small heat shock protein (HSP20) family.

The protein localises to the cytoplasm. It is found in the nucleus. This is Heat shock protein 16 (hsp16) from Schizosaccharomyces pombe (strain 972 / ATCC 24843) (Fission yeast).